Here is an 84-residue protein sequence, read N- to C-terminus: MSSDNQSKTLIGQVVSDKRDKTVTVRIDRKVKHPLYGKIVTRSSKYHAHDELNQYKLGDIVAISETRPKSKTKAWQVVRVIKVN.

Belongs to the universal ribosomal protein uS17 family. Part of the 30S ribosomal subunit.

One of the primary rRNA binding proteins, it binds specifically to the 5'-end of 16S ribosomal RNA. The sequence is that of Small ribosomal subunit protein uS17 from Nitrosomonas europaea (strain ATCC 19718 / CIP 103999 / KCTC 2705 / NBRC 14298).